The primary structure comprises 723 residues: MEFASFLVSLGTSAIIFVVLMFLFTWLSRRPGNVPVYYPNRILKGMDPWEGSSLTRNPFAWIREAFTSTEQDVVKLSGVDTAVYFVFQSTVLGIFALSALLLLPTLLPIAATDNNLETSRSATDTTSNGTFSQLDNLSMANITKSSSRLWAFLGAVYWVSVVTYFMLWKAYKHVAALRAQALMTSEEVLPEQFAILVRDIPSPPNGETQKEFVDSYFRDIYPETFYRSLVVTENSKINKIWEDLEGYKKKLARAEAAFAATSNRPTNKTGLLGLVGERVDSIDYYTKLINESVAKLEAEQRTVLAERQQTAAVVFFTDRVTAALAAQSLHCQMVDKWTVTEAPEPRQLIWENLKIKFFSRIVRQYVIYFLVAITILFYMIPIAFVSAITTLANLQKALPFLKPIVDIAFIRTILESYLPQIALIVFLAMLPKFLMFLSKSEGIPSQSHAIRATSGKYFYFSVLNVFIGVTLAGSLFENLKALEEKPNSFITLLATSLPKSATFFLTYVALKFFVGYGLELSRIIPLIIFHLKKKYLCKTEAEVKEAWYPGDLSYATRVPSDMLILTITFCYSVIAPLILVFGVIYFGLGWLILRNQALKVYVPSYESYGRMWPHIHTRILAALFLFQLVMFGYLGVKIFVWAILLVPLIFISLIFGYVCRQKFYGGFEHTALEVACRELKQRPDLEEVFRAYIPHSLSTHKGDDHQFKGAMSRYQDYAAISAA.

The Cytoplasmic segment spans residues 1–5; sequence MEFAS. The helical transmembrane segment at 6 to 26 threads the bilayer; that stretch reads FLVSLGTSAIIFVVLMFLFTW. Residues 27–90 lie on the Extracellular side of the membrane; the sequence is LSRRPGNVPV…TAVYFVFQST (64 aa). The chain crosses the membrane as a helical span at residues 91-111; sequence VLGIFALSALLLLPTLLPIAA. The Cytoplasmic segment spans residues 112 to 148; it reads TDNNLETSRSATDTTSNGTFSQLDNLSMANITKSSSR. A helical transmembrane segment spans residues 149–169; it reads LWAFLGAVYWVSVVTYFMLWK. Topologically, residues 170 to 364 are extracellular; sequence AYKHVAALRA…IKFFSRIVRQ (195 aa). A helical transmembrane segment spans residues 365-385; it reads YVIYFLVAITILFYMIPIAFV. Over 386 to 416 the chain is Cytoplasmic; sequence SAITTLANLQKALPFLKPIVDIAFIRTILES. The helical transmembrane segment at 417-437 threads the bilayer; that stretch reads YLPQIALIVFLAMLPKFLMFL. The Extracellular segment spans residues 438–456; sequence SKSEGIPSQSHAIRATSGK. A helical membrane pass occupies residues 457 to 477; it reads YFYFSVLNVFIGVTLAGSLFE. At 478 to 508 the chain is on the cytoplasmic side; the sequence is NLKALEEKPNSFITLLATSLPKSATFFLTYV. The chain crosses the membrane as a helical span at residues 509-529; the sequence is ALKFFVGYGLELSRIIPLIIF. Over 530 to 572 the chain is Extracellular; the sequence is HLKKKYLCKTEAEVKEAWYPGDLSYATRVPSDMLILTITFCYS. A helical transmembrane segment spans residues 573-593; that stretch reads VIAPLILVFGVIYFGLGWLIL. Residues 594 to 614 lie on the Cytoplasmic side of the membrane; sequence RNQALKVYVPSYESYGRMWPH. A helical transmembrane segment spans residues 615 to 635; it reads IHTRILAALFLFQLVMFGYLG. At 636-637 the chain is on the extracellular side; sequence VK. A helical transmembrane segment spans residues 638–658; sequence IFVWAILLVPLIFISLIFGYV. Over 659 to 723 the chain is Cytoplasmic; the sequence is CRQKFYGGFE…YQDYAAISAA (65 aa).

It belongs to the CSC1 (TC 1.A.17) family.

The protein localises to the plastid. It is found in the chloroplast membrane. Functionally, acts as an osmosensitive calcium-permeable cation channel. The protein is CSC1-like protein ERD4 (ERD4) of Brassica juncea (Indian mustard).